Reading from the N-terminus, the 60-residue chain is Large ribosomal subunit protein bL32 (60 aa).

A compositionally biased stretch (basic residues) spans 1–22; it reads MAVPKKKTSKSRRDMRRSHHAL. Residues 1–27 form a disordered region; that stretch reads MAVPKKKTSKSRRDMRRSHHALKGSAY.

The protein belongs to the bacterial ribosomal protein bL32 family.

In Rhodospirillum centenum (strain ATCC 51521 / SW), this protein is Large ribosomal subunit protein bL32.